The following is a 429-amino-acid chain: MSNTDAFFSRPLAEVDPDIFGAIEKELGRQRHEIELIASENIVSRAVLEAQGSIMTNKYAEGYPGKRYYGGCQFVDIAEELAIERAKKLFGVNFANVQPNSGSQMNQAVFLALLQPGDTFMGLDLNSGGHLTHGSPVNMSGKWFNVVSYGVREGDNLLDMDEVERKAKETRPKLILAGGTAYSRVWDWKRFREIADEVGAYLMVDMAHIAGLVAGGQHPSPFPHCHVATTTTHKSLRGPRGGMILTNDEDLAKKFNSAVFPGLQGGPLMHVIAAKAVAFGEALQPEFKDYAAQVVKNAKALAETLIEGGLDVVSGGTDNHLMLVDLRKKNATGKRAEAALGRAYITCNKNGIPFDPEKPFVTSGVRLGTPAGTTRGFKEAEFREIGKLIVEVLDGLKVANSDEGNASVEAAVREKVVGLTDRFPMYPYM.

(6S)-5,6,7,8-tetrahydrofolate is bound by residues leucine 125 and glycine 129–leucine 131. Lysine 234 is subject to N6-(pyridoxal phosphate)lysine.

This sequence belongs to the SHMT family. In terms of assembly, homodimer. It depends on pyridoxal 5'-phosphate as a cofactor.

The protein resides in the cytoplasm. It carries out the reaction (6R)-5,10-methylene-5,6,7,8-tetrahydrofolate + glycine + H2O = (6S)-5,6,7,8-tetrahydrofolate + L-serine. It functions in the pathway one-carbon metabolism; tetrahydrofolate interconversion. Its pathway is amino-acid biosynthesis; glycine biosynthesis; glycine from L-serine: step 1/1. Functionally, catalyzes the reversible interconversion of serine and glycine with tetrahydrofolate (THF) serving as the one-carbon carrier. This reaction serves as the major source of one-carbon groups required for the biosynthesis of purines, thymidylate, methionine, and other important biomolecules. Also exhibits THF-independent aldolase activity toward beta-hydroxyamino acids, producing glycine and aldehydes, via a retro-aldol mechanism. The chain is Serine hydroxymethyltransferase 1 from Agrobacterium fabrum (strain C58 / ATCC 33970) (Agrobacterium tumefaciens (strain C58)).